Here is a 301-residue protein sequence, read N- to C-terminus: uncharacterized protein (301 aa).

The region spanning 45 to 286 (KELSDGWALN…EELGKMFTEL (242 aa)) is the Radical SAM core domain.

This is an uncharacterized protein from Acidianus two-tailed virus (ATV).